The sequence spans 354 residues: Kelch domain-containing protein 8B (354 aa).

Kelch repeat units follow at residues M1–G31, H32–K79, V81–G127, M128–N175, K176–G222, V224–G281, N282–P329, and L331–V354.

It is found in the cytoplasm. It localises to the midbody. Functionally, involved in pinching off the separated nuclei at the cleavage furrow and in cytokinesis. Required for mitotic integrity and maintenance of chromosomal stability. Protects cells against mitotic errors, centrosomal amplification, micronucleus formation and aneuploidy. Plays a key role of midbody function involving abscission of the daughter cells during cytokinesis and appropriate chromosomal and nuclear segregation into the daughter cells. The sequence is that of Kelch domain-containing protein 8B (Klhdc8b) from Mus musculus (Mouse).